A 356-amino-acid chain; its full sequence is Phospho-2-dehydro-3-deoxyheptonate aldolase, Tyr-sensitive (356 aa).

The protein belongs to the class-I DAHP synthase family. The cofactor is a divalent metal cation.

The catalysed reaction is D-erythrose 4-phosphate + phosphoenolpyruvate + H2O = 7-phospho-2-dehydro-3-deoxy-D-arabino-heptonate + phosphate. It functions in the pathway metabolic intermediate biosynthesis; chorismate biosynthesis; chorismate from D-erythrose 4-phosphate and phosphoenolpyruvate: step 1/7. Its activity is regulated as follows. Specifically feedback inhibited by tyrosine with 50% inhibition observed at 9 microM tyrosine, pH 7.0. Stereospecific condensation of phosphoenolpyruvate (PEP) and D-erythrose-4-phosphate (E4P) giving rise to 3-deoxy-D-arabino-heptulosonate-7-phosphate (DAHP). This chain is Phospho-2-dehydro-3-deoxyheptonate aldolase, Tyr-sensitive (aroF), found in Escherichia coli (strain K12).